The chain runs to 471 residues: Acetylcholinesterase collagenic tail peptide (471 aa).

Residues 1–30 (MLGILLQKATATLASGLNSSRAGMFPIALG) form the signal peptide. Positions 70–86 (CCLLTPPPPPMFPPPFF) are PRAD. Collagen-like domains follow at residues 118–282 (GPPG…SGLP) and 293–307 (GPKGERGLPGPVGRC). Disordered stretches follow at residues 140-205 (EIGE…GEKG) and 237-267 (KGVSGAPGHRGPVGRPGKRGKTGLKGDIGPP). Composition is skewed to low complexity over residues 155 to 164 (VRGPRGMPGS) and 242 to 251 (APGHRGPVGR). 2 tandem repeats follow at residues 388–413 (FCGDEIVQVENGEECDDGNRIVTDSC) and 420–443 (YCGDGYLQSGLEECDGKDFGYHTC). The tract at residues 388 to 443 (FCGDEIVQVENGEECDDGNRIVTDSCINCKQAYCGDGYLQSGLEECDGKDFGYHTC) is 2 X 26 AA approximate repeats.

It belongs to the COLQ family. The asymmetric form of AChE is a disulfide-bonded oligomer composed of a collagenic subunit (Q) and a variable number of asymmetric (T) catalytic subunits. The N-terminal of the collagenic subunit (Q) associates with the C-terminal of the catalytic subunit (T). As to expression, expressed in electric organs but not in muscle.

The protein localises to the synapse. Its function is as follows. Anchors the catalytic subunits of asymmetric AChE to the synaptic basal lamina. The chain is Acetylcholinesterase collagenic tail peptide from Torpedo marmorata (Marbled electric ray).